Here is a 379-residue protein sequence, read N- to C-terminus: Armadillo repeat-containing X-linked protein 3 (379 aa).

Residues Met-1 to Lys-6 lie on the Mitochondrial intermembrane side of the membrane. Mitochondrion outer membrane (MOM)-targeting sequence stretches follow at residues Met-1–Lys-6 and Arg-26–Lys-37. The chain crosses the membrane as a helical; Signal-anchor span at residues Val-7–Arg-29. The Cytoplasmic portion of the chain corresponds to Gly-30–Glu-379. Phosphoserine occurs at positions 61, 67, and 72. The segment at Arg-89 to Ala-98 is nuclear localization signal. Ser-110 is modified (phosphoserine). ARM repeat units lie at residues Pro-111–Ala-151, Ala-153–Val-192, and Val-233–Glu-272.

The protein belongs to the eutherian X-chromosome-specific Armcx family. As to quaternary structure, interacts (via ARM domain) with MIRO1, MIRO2 and TRAK2. The interaction with Miro is calcium-dependent. Interacts with SOX10.

It is found in the mitochondrion outer membrane. Its subcellular location is the cytoplasm. The protein localises to the nucleus. In terms of biological role, regulates mitochondrial aggregation and transport in axons in living neurons. May link mitochondria to the TRAK2-kinesin motor complex via its interaction with Miro and TRAK2. Mitochondrial distribution and dynamics is regulated through ARMCX3 protein degradation, which is promoted by PCK and negatively regulated by WNT1. Enhances the SOX10-mediated transactivation of the neuronal acetylcholine receptor subunit alpha-3 and beta-4 subunit gene promoters. The polypeptide is Armadillo repeat-containing X-linked protein 3 (ARMCX3) (Pongo abelii (Sumatran orangutan)).